A 445-amino-acid polypeptide reads, in one-letter code: Glycine--tRNA ligase (445 aa).

Substrate is bound by residues Arg-97 and Glu-145. Residues 177–179 (RNE), 187–192 (FRTCEF), 262–263 (EV), and 308–311 (GLTR) contribute to the ATP site. Position 192–196 (192–196 (FEQME)) interacts with substrate. 304-308 (ETSAG) contributes to the substrate binding site.

This sequence belongs to the class-II aminoacyl-tRNA synthetase family. As to quaternary structure, homodimer.

Its subcellular location is the cytoplasm. The catalysed reaction is tRNA(Gly) + glycine + ATP = glycyl-tRNA(Gly) + AMP + diphosphate. Its function is as follows. Catalyzes the attachment of glycine to tRNA(Gly). In Borrelia garinii subsp. bavariensis (strain ATCC BAA-2496 / DSM 23469 / PBi) (Borreliella bavariensis), this protein is Glycine--tRNA ligase.